Reading from the N-terminus, the 172-residue chain is Stellate protein CG33237 (172 aa).

Belongs to the casein kinase 2 subunit beta family. Interacts in vitro with the casein kinase 2 alpha subunit (CkII-alpha). The relevance of such interaction is however unclear in vivo. In terms of tissue distribution, probably not expressed in wild-type flies. In males lacking the Y chromosome, it is testis-specific and constitutes the main component of star-shaped crystals.

Unknown. In males lacking the Y chromosome, its strong overexpression leads to the appearance of proteinaceous star-shaped crystals in the primary spermatocytes causing meiotic drive, possibly by interfering with normal casein kinase 2 activity. This is Stellate protein CG33237 (Ste:CG33237) from Drosophila melanogaster (Fruit fly).